The sequence spans 298 residues: DNA repair protein RecO (298 aa).

It belongs to the RecO family.

In terms of biological role, involved in DNA repair and RecF pathway recombination. The sequence is that of DNA repair protein RecO from Cupriavidus metallidurans (strain ATCC 43123 / DSM 2839 / NBRC 102507 / CH34) (Ralstonia metallidurans).